We begin with the raw amino-acid sequence, 243 residues long: NAD-dependent protein deacylase SIR2rp3 (243 aa).

Residues 1 to 239 enclose the Deacetylase sirtuin-type domain; it reads MKACRCITIL…PTWVDQVLKE (239 aa). 12–31 contacts NAD(+); sequence GAGISAESGISTFRDSNGLW. Residues tyrosine 56 and arginine 59 each contribute to the substrate site. Residue 95 to 98 participates in NAD(+) binding; sequence QNVD. Catalysis depends on histidine 113, which acts as the Proton acceptor. The Zn(2+) site is built by cysteine 121 and cysteine 141. NAD(+) contacts are provided by residues 181-183 and alanine 225; that span reads GTS.

The protein belongs to the sirtuin family. Class III subfamily. It depends on Zn(2+) as a cofactor.

The protein resides in the mitochondrion. It catalyses the reaction N(6)-malonyl-L-lysyl-[protein] + NAD(+) + H2O = 2''-O-malonyl-ADP-D-ribose + nicotinamide + L-lysyl-[protein]. The catalysed reaction is N(6)-succinyl-L-lysyl-[protein] + NAD(+) + H2O = 2''-O-succinyl-ADP-D-ribose + nicotinamide + L-lysyl-[protein]. The enzyme catalyses N(6)-glutaryl-L-lysyl-[protein] + NAD(+) + H2O = 2''-O-glutaryl-ADP-D-ribose + nicotinamide + L-lysyl-[protein]. NAD-dependent lysine demalonylase, desuccinylase and deglutarylase that specifically removes malonyl, succinyl and glutaryl groups on target proteins. Has weak NAD-dependent protein deacetylase activity; however this activity may not be physiologically relevant in vivo. This is NAD-dependent protein deacylase SIR2rp3 (SIR2rp3) from Leishmania major.